The primary structure comprises 470 residues: E3 ubiquitin-protein ligase TRIM21 (470 aa).

The segment at 20-59 (CSICLDPMVEPMSIECGHCFCKECIFEVGKNGGSSCPECR) adopts an RING-type zinc-finger fold. Zn(2+) contacts are provided by cysteine 96, histidine 99, cysteine 118, and histidine 124. A B box-type zinc finger spans residues 96 to 127 (CMKHGEKLHLFCEEDGQALCWVCAQSGKHRDH). The stretch at 188–250 (LQNSLLAQEE…RGSELELLQE (63 aa)) forms a coiled coil. The B30.2/SPRY domain maps to 272–470 (DLTSTCPVPG…APLKLCPLKM (199 aa)).

It belongs to the TRIM/RBCC family. Homotrimer. Component of a SCF(SKP2)-like complex containing CUL1, SKP1, TRIM21 and SKP2. Interacts with CALR, CUL1, FBXW11, HSPA5, IKBKB, IRF3, SKP1 and VCP. Interacts with SKP2; the interaction with SKP2 does not depend on an intact F-box domain. Interacts (via N-terminus and C-terminus) with DCP2 (via N-terminus and C-terminus). Interacts (via C-terminus) with IRF8 (via C-terminus). Interacts with ULK1, BECN1 and with ATG8 family members, including GABARAP, GABARAPL1, GABARAPL2 and MAP1LC3C/LC3C. Interacts with TRIM21 and SQSTM1/sequestosome 1. Interacts with IRF3. Interacts (via the SPRY domain) with NMI (via coiled-coil domain); the interaction promotes 'Lys-63'-linked ubiquitination of NMI. Interacts with IFI35 and NMI; the interaction facilitates NMI-IFI35 complex formation. Post-translationally, autoubiquitinated; does not lead to its proteasomal degradation. Deubiquitinated by USP4; leading to its stabilization. Autoubiquitinated.

It is found in the cytoplasm. The protein localises to the cytoplasmic vesicle. The protein resides in the autophagosome. Its subcellular location is the nucleus. It localises to the P-body. It is found in the stress granule. The catalysed reaction is S-ubiquitinyl-[E2 ubiquitin-conjugating enzyme]-L-cysteine + [acceptor protein]-L-lysine = [E2 ubiquitin-conjugating enzyme]-L-cysteine + N(6)-ubiquitinyl-[acceptor protein]-L-lysine.. The protein operates within protein modification; protein ubiquitination. E3 ubiquitin-protein ligase whose activity is dependent on E2 enzymes, UBE2D1, UBE2D2, UBE2E1 and UBE2E2. Forms a ubiquitin ligase complex in cooperation with the E2 UBE2D2 that is used not only for the ubiquitination of USP4 and IKBKB but also for its self-ubiquitination. Component of cullin-RING-based SCF (SKP1-CUL1-F-box protein) E3 ubiquitin-protein ligase complexes such as SCF(SKP2)-like complexes. A TRIM21-containing SCF(SKP2)-like complex is shown to mediate ubiquitination of CDKN1B ('Thr-187' phosphorylated-form), thereby promoting its degradation by the proteasome. Monoubiquitinates IKBKB that will negatively regulates Tax-induced NF-kappa-B signaling. Negatively regulates IFN-beta production post-pathogen recognition by catalyzing polyubiquitin-mediated degradation of IRF3. Mediates the ubiquitin-mediated proteasomal degradation of IgG1 heavy chain, which is linked to the VCP-mediated ER-associated degradation (ERAD) pathway. Promotes IRF8 ubiquitination, which enhanced the ability of IRF8 to stimulate cytokine genes transcription in macrophages. Plays a role in the regulation of the cell cycle progression. Enhances the decapping activity of DCP2. Exists as a ribonucleoprotein particle present in all mammalian cells studied and composed of a single polypeptide and one of four small RNA molecules. At least two isoforms are present in nucleated and red blood cells, and tissue specific differences in RO/SSA proteins have been identified. The common feature of these proteins is their ability to bind HY RNAs.2. Involved in the regulation of innate immunity and the inflammatory response in response to IFNG/IFN-gamma. Organizes autophagic machinery by serving as a platform for the assembly of ULK1, Beclin 1/BECN1 and ATG8 family members and recognizes specific autophagy targets, thus coordinating target recognition with assembly of the autophagic apparatus and initiation of autophagy. Also regulates autophagy through FIP200/RB1CC1 ubiquitination and subsequent decreased protein stability. Represses the innate antiviral response by facilitating the formation of the NMI-IFI35 complex through 'Lys-63'-linked ubiquitination of NMI. During viral infection, promotes cell pyroptosis by mediating 'Lys-6'-linked ubiquitination of ISG12a/IFI27, facilitating its translocation into the mitochondria and subsequent CASP3 activation. When up-regulated through the IFN/JAK/STAT signaling pathway, promotes 'Lys-27'-linked ubiquitination of MAVS, leading to the recruitment of TBK1 and up-regulation of innate immunity. Mediates 'Lys-63'-linked polyubiquitination of G3BP1 in response to heat shock, leading to stress granule disassembly. In Mus musculus (Mouse), this protein is E3 ubiquitin-protein ligase TRIM21 (Trim21).